Consider the following 62-residue polypeptide: Sperm protamine P1 (62 aa).

A disordered region spans residues 1–62 (MARYRHSRSR…RYSRRRRRRY (62 aa)).

The protein belongs to the protamine P1 family. Testis.

It localises to the nucleus. The protein localises to the chromosome. Functionally, protamines substitute for histones in the chromatin of sperm during the haploid phase of spermatogenesis. They compact sperm DNA into a highly condensed, stable and inactive complex. The protein is Sperm protamine P1 (PRM1) of Lagostrophus fasciatus (Banded hare-wallaby).